The following is a 376-amino-acid chain: Ribosomal RNA large subunit methyltransferase G (376 aa).

The protein belongs to the methyltransferase superfamily. RlmG family.

Its subcellular location is the cytoplasm. The enzyme catalyses guanosine(1835) in 23S rRNA + S-adenosyl-L-methionine = N(2)-methylguanosine(1835) in 23S rRNA + S-adenosyl-L-homocysteine + H(+). Functionally, specifically methylates the guanine in position 1835 (m2G1835) of 23S rRNA. This Vibrio vulnificus (strain CMCP6) protein is Ribosomal RNA large subunit methyltransferase G.